Reading from the N-terminus, the 105-residue chain is Small ribosomal subunit protein uS10 (105 aa).

The protein belongs to the universal ribosomal protein uS10 family. Part of the 30S ribosomal subunit.

In terms of biological role, involved in the binding of tRNA to the ribosomes. This chain is Small ribosomal subunit protein uS10, found in Arthrospira platensis (Spirulina platensis).